The sequence spans 170 residues: 4-hydroxyphenylacetate 3-monooxygenase reductase component (170 aa).

This sequence belongs to the non-flavoprotein flavin reductase family. HpaC subfamily. As to quaternary structure, homodimer. 4-HPA 3-monooxygenase consists of a reductase component HpaC and an oxygenase component HpaB.

It carries out the reaction a reduced flavin + NAD(+) = an oxidized flavin + NADH + 2 H(+). It participates in aromatic compound metabolism; 4-hydroxyphenylacetate degradation; pyruvate and succinate semialdehyde from 4-hydroxyphenylacetate: step 1/7. Functionally, catalyzes the reduction of free flavins (FMN, FAD and riboflavin) by NADH. Subsequently, the reduced flavins diffuse to the large HpaB component or to other electron acceptors such as cytochrome c and Fe(3+) ion. The polypeptide is 4-hydroxyphenylacetate 3-monooxygenase reductase component (hpaC) (Salmonella typhimurium (strain LT2 / SGSC1412 / ATCC 700720)).